The chain runs to 107 residues: Anti-adapter protein IraM (107 aa).

This sequence belongs to the IraM/RssC family.

The protein resides in the cytoplasm. Functionally, inhibits RpoS proteolysis by regulating RssB activity, thereby increasing the stability of the sigma stress factor RpoS during magnesium starvation. The protein is Anti-adapter protein IraM of Escherichia coli O7:K1 (strain IAI39 / ExPEC).